The chain runs to 363 residues: Peptide chain release factor 1 (363 aa).

Position 237 is an N5-methylglutamine (Gln237).

Belongs to the prokaryotic/mitochondrial release factor family. Methylated by PrmC. Methylation increases the termination efficiency of RF1.

Its subcellular location is the cytoplasm. Peptide chain release factor 1 directs the termination of translation in response to the peptide chain termination codons UAG and UAA. The protein is Peptide chain release factor 1 of Mesoplasma florum (strain ATCC 33453 / NBRC 100688 / NCTC 11704 / L1) (Acholeplasma florum).